A 292-amino-acid chain; its full sequence is Fat storage-inducing transmembrane protein 1 (292 aa).

Residues Met-1–Arg-18 lie on the Lumenal side of the membrane. The helical transmembrane segment at Ala-19 to Gly-39 threads the bilayer. Topologically, residues Ser-40–Arg-54 are cytoplasmic. Residues Leu-55–Asn-75 form a helical membrane-spanning segment. At Pro-76–Ser-94 the chain is on the lumenal side. Residues Ala-95 to Thr-115 traverse the membrane as a helical segment. At Arg-116–Ala-141 the chain is on the cytoplasmic side. The helical transmembrane segment at Phe-142–Leu-162 threads the bilayer. The Lumenal segment spans residues His-163 to Thr-187. His-186 is an active-site residue. A helical transmembrane segment spans residues Phe-188–Leu-208. Residues Ala-209–Leu-220 are Cytoplasmic-facing. The chain crosses the membrane as a helical span at residues Val-221–Ile-241. Residues Tyr-242–Lys-249 are Lumenal-facing. The active site involves His-244. Residues Val-250–Gln-270 traverse the membrane as a helical segment. The Cytoplasmic segment spans residues Pro-271–Asn-292.

The protein belongs to the FIT family. FIT1 subfamily.

It is found in the endoplasmic reticulum membrane. Plays an important role in the formation of lipid droplets (LDs) which are storage organelles at the center of lipid and energy homeostasis. Directly binds to diacylglycerol (DAGs) and triacylglycerol. This Bos taurus (Bovine) protein is Fat storage-inducing transmembrane protein 1.